The chain runs to 184 residues: Ribonuclease HII (184 aa).

The RNase H type-2 domain occupies 2–184 (AKICGIDEAG…KPKLAQSSLF (183 aa)). Residues aspartate 8, glutamate 9, and aspartate 95 each coordinate a divalent metal cation.

Belongs to the RNase HII family. Mn(2+) is required as a cofactor. It depends on Mg(2+) as a cofactor.

Its subcellular location is the cytoplasm. The catalysed reaction is Endonucleolytic cleavage to 5'-phosphomonoester.. Functionally, endonuclease that specifically degrades the RNA of RNA-DNA hybrids. The sequence is that of Ribonuclease HII from Campylobacter concisus (strain 13826).